The following is a 754-amino-acid chain: MEINPYLMFLNNDVTSLISTTYPYTGPPPMSHGSSTKYTLETIKRTYDYSRTSVEKTSKVFNIPRRKFCNCLEDKDDLVKPTGNVDISSLLGLAEMMEKRMGEGFFKHCVMEAETEILKMHFSRLTEGRQTYDWTSERNMPAATALQLTVDAIKETEGPFKGTTMLEYCNKMIEMLDWKEVKFRKVKTMVRREKDKRSGKEIKTKVPVMGIDSIKHDEFLIRALTINTMAKDGERGKLQRRAIATPGMIVRPFSKIVETVAQKICEKLKESGLPVGGNEKKAKLKTTVTSLNARMNSDQFAVNITGDNSKWNECQQPEAYLALLAYITKDSSDLMKDLCSVAPVLFCNKFVKLGQGIRLSNKRKTKEVIIKAEKMGKYKNLMREEYKNLFEPLEKYIQKDVCFLPGGMLMGMFNMLSTVLGVSTLCYMDEELKAKGCFWTGLQSSDDFVLFAVASNWSNIHWTIRRFNAVCKLIGINMSLEKSYGSLPELFEFTSMFFDGEFVSNLAMELPAFTTAGVNEGVDFTAAMSIIKTNMINNSLSPSTALMALRICLQEFRATYRVHPWDSKVKGGRMKIINEFIKTIESKDGLLIADGGKLMNNISTLHIPEEVLKFEKMDEQYRNRVFNPKNPFTNFDKTIDIFRAHGPIRVEENEAVVSTHSFRTRANRTLLNTDMRAMMAEEKRYQMVCDIFKSVFESADINPPIGAMSIGEAIEEKLLERAKMKRDIGAIEDSEYEEIKDIIRDAKKARIESR.

2 short sequence motifs (nuclear localization signal) span residues Met189–Arg197 and Lys205–Glu218. Residues Arg251 to Glu258 form a promoter-binding site region. A RdRp catalytic domain is found at Val288 to Tyr484.

The protein belongs to the influenza viruses polymerase PB1 family. Influenza RNA polymerase is composed of three subunits: PB1, PB2 and PA. Interacts (via N-terminus) with PA (via C-terminus). Interacts (via C-terminus) with PB2 (via N-terminus); this interaction is essential for transcription initiation. In terms of processing, phosphorylated by host PRKCA.

It localises to the host nucleus. It is found in the host cytoplasm. The catalysed reaction is RNA(n) + a ribonucleoside 5'-triphosphate = RNA(n+1) + diphosphate. Functionally, RNA-dependent RNA polymerase which is responsible for replication and transcription of virus RNA segments. The transcription of viral mRNAs occurs by a unique mechanism called cap-snatching. 5' methylated caps of cellular mRNAs are cleaved after 10-13 nucleotides by PA. In turn, these short capped RNAs are used as primers by PB1 for transcription of viral mRNAs. During virus replication, PB1 initiates RNA synthesis and copy vRNA into complementary RNA (cRNA) which in turn serves as a template for the production of more vRNAs. This chain is RNA-directed RNA polymerase catalytic subunit, found in Homo sapiens (Human).